The chain runs to 89 residues: Probable monothiol glutaredoxin GrlA (89 aa).

The 89-residue stretch at 1–89 folds into the Glutaredoxin domain; it reads MLYMKGTPKM…EPMLRDAVAA (89 aa). A glutathione-binding site is contributed by K5. C13 serves as a coordination point for [2Fe-2S] cluster. Residues R42, F54, and 67–68 each bind glutathione; that span reads SD.

The protein belongs to the glutaredoxin family. Monothiol subfamily.

The sequence is that of Probable monothiol glutaredoxin GrlA (grlA) from Legionella pneumophila subsp. pneumophila (strain Philadelphia 1 / ATCC 33152 / DSM 7513).